Consider the following 227-residue polypeptide: Probable chorismate pyruvate-lyase (227 aa).

Substrate is bound by residues R75, L113, and E173. The interval 192-227 (SGDWSAHPRVREHGRPLEHTASRAHPATRASDEQRR) is disordered. The segment covering 200 to 212 (RVREHGRPLEHTA) has biased composition (basic and acidic residues).

It belongs to the UbiC family.

It is found in the cytoplasm. The catalysed reaction is chorismate = 4-hydroxybenzoate + pyruvate. The protein operates within cofactor biosynthesis; ubiquinone biosynthesis. Removes the pyruvyl group from chorismate, with concomitant aromatization of the ring, to provide 4-hydroxybenzoate (4HB) for the ubiquinone pathway. In Paraburkholderia xenovorans (strain LB400), this protein is Probable chorismate pyruvate-lyase.